The following is a 707-amino-acid chain: Ribosomal RNA large subunit methyltransferase K/L (707 aa).

The region spanning 44–155 (VIYNLCLWSR…NDILTVSFDL (112 aa)) is the THUMP domain.

This sequence belongs to the methyltransferase superfamily. RlmKL family.

It is found in the cytoplasm. It catalyses the reaction guanosine(2445) in 23S rRNA + S-adenosyl-L-methionine = N(2)-methylguanosine(2445) in 23S rRNA + S-adenosyl-L-homocysteine + H(+). The catalysed reaction is guanosine(2069) in 23S rRNA + S-adenosyl-L-methionine = N(2)-methylguanosine(2069) in 23S rRNA + S-adenosyl-L-homocysteine + H(+). In terms of biological role, specifically methylates the guanine in position 2445 (m2G2445) and the guanine in position 2069 (m7G2069) of 23S rRNA. The chain is Ribosomal RNA large subunit methyltransferase K/L from Legionella pneumophila (strain Paris).